The chain runs to 379 residues: Glucose-1-phosphate adenylyltransferase (379 aa).

Alpha-D-glucose 1-phosphate-binding positions include glycine 164, 179 to 180 (EK), and serine 190.

The protein belongs to the bacterial/plant glucose-1-phosphate adenylyltransferase family. In terms of assembly, homotetramer.

The enzyme catalyses alpha-D-glucose 1-phosphate + ATP + H(+) = ADP-alpha-D-glucose + diphosphate. It participates in glycan biosynthesis; glycogen biosynthesis. Involved in the biosynthesis of ADP-glucose, a building block required for the elongation reactions to produce glycogen. Catalyzes the reaction between ATP and alpha-D-glucose 1-phosphate (G1P) to produce pyrophosphate and ADP-Glc. This Streptococcus agalactiae serotype III (strain NEM316) protein is Glucose-1-phosphate adenylyltransferase.